The sequence spans 224 residues: Proteasome subunit beta (224 aa).

Positions 1–6 are cleaved as a propeptide — removed in mature form; by autocatalysis; sequence MDVMKG. Thr-7 serves as the catalytic Nucleophile.

Belongs to the peptidase T1B family. In terms of assembly, the 20S proteasome core is composed of 14 alpha and 14 beta subunits that assemble into four stacked heptameric rings, resulting in a barrel-shaped structure. The two inner rings, each composed of seven catalytic beta subunits, are sandwiched by two outer rings, each composed of seven alpha subunits. The catalytic chamber with the active sites is on the inside of the barrel. Has a gated structure, the ends of the cylinder being occluded by the N-termini of the alpha-subunits. Is capped at one or both ends by the proteasome regulatory ATPase, PAN.

It localises to the cytoplasm. It carries out the reaction Cleavage of peptide bonds with very broad specificity.. The formation of the proteasomal ATPase PAN-20S proteasome complex, via the docking of the C-termini of PAN into the intersubunit pockets in the alpha-rings, triggers opening of the gate for substrate entry. Interconversion between the open-gate and close-gate conformations leads to a dynamic regulation of the 20S proteasome proteolysis activity. In terms of biological role, component of the proteasome core, a large protease complex with broad specificity involved in protein degradation. In Methanocaldococcus sp. (strain FS406-22), this protein is Proteasome subunit beta.